Consider the following 214-residue polypeptide: uncharacterized protein (214 aa).

Helical transmembrane passes span 10-30 (IPPLAVYLLVSGVVGVESLGI), 55-75 (IGVGVVAVIGAAVGDSIGYAI), 147-167 (VSGAICWAGGTTALVYFAGMA), and 174-194 (RFSWIALIITVVVGIIAAILL).

This sequence belongs to the DedA family.

It localises to the cell membrane. This is an uncharacterized protein from Mycobacterium leprae (strain TN).